Here is a 633-residue protein sequence, read N- to C-terminus: Threonine--tRNA ligase (633 aa).

The 61-residue stretch at 1 to 61 folds into the TGS domain; sequence MINVYFSDNS…TEDCKFEVIT (61 aa). Residues 242 to 533 form a catalytic region; sequence DHRKIGKELE…LIEHHSGKLP (292 aa). The Zn(2+) site is built by Cys333, His384, and His510.

It belongs to the class-II aminoacyl-tRNA synthetase family. In terms of assembly, homodimer. It depends on Zn(2+) as a cofactor.

The protein localises to the cytoplasm. The enzyme catalyses tRNA(Thr) + L-threonine + ATP = L-threonyl-tRNA(Thr) + AMP + diphosphate + H(+). In terms of biological role, catalyzes the attachment of threonine to tRNA(Thr) in a two-step reaction: L-threonine is first activated by ATP to form Thr-AMP and then transferred to the acceptor end of tRNA(Thr). Also edits incorrectly charged L-seryl-tRNA(Thr). This Ehrlichia ruminantium (strain Welgevonden) protein is Threonine--tRNA ligase.